The chain runs to 656 residues: Protein O1 homolog (656 aa).

Residues 544 to 564 (FIKKVILANVIFEYIFTLIII) form a helical membrane-spanning segment.

It belongs to the chordopoxvirinae O1 family.

The protein resides in the membrane. This Vertebrata (FPV) protein is Protein O1 homolog.